Reading from the N-terminus, the 292-residue chain is Cytidine deaminase (292 aa).

CMP/dCMP-type deaminase domains lie at 47–167 (TTLK…FGPK) and 186–292 (DHQD…YYSL). 88-90 (NQE) provides a ligand contact to substrate. A Zn(2+)-binding site is contributed by H101. E103 (proton donor) is an active-site residue. Positions 128 and 131 each coordinate Zn(2+).

It belongs to the cytidine and deoxycytidylate deaminase family. In terms of assembly, homodimer. The cofactor is Zn(2+).

It carries out the reaction cytidine + H2O + H(+) = uridine + NH4(+). The enzyme catalyses 2'-deoxycytidine + H2O + H(+) = 2'-deoxyuridine + NH4(+). This enzyme scavenges exogenous and endogenous cytidine and 2'-deoxycytidine for UMP synthesis. The polypeptide is Cytidine deaminase (Haemophilus influenzae (strain ATCC 51907 / DSM 11121 / KW20 / Rd)).